A 464-amino-acid chain; its full sequence is CRISPR system endoribonuclease Csm6 (464 aa).

The interval 1-190 (MEDLDALWER…LRILPNPHEA (190 aa)) is CARF domain. Residues 191–464 (LAEVDALFAK…LSPEPVPLGF (274 aa)) are HEPN domain.

The protein belongs to the CRISPR-associated Csm6 family. Homodimer. The protein forms a twisted, head-to-head dimer; the composite ssRNase active site is formed at the dimer interface. It depends on Does not require a metal cofactor. as a cofactor.

Non-specific ssRNase activity is allosterically activated about 1000-fold by cyclic tetraadenylate (cA4), which probably binds to its CARF domain. Its function is as follows. CRISPR (clustered regularly interspaced short palindromic repeat) is an adaptive immune system that provides protection against mobile genetic elements (viruses, transposable elements and conjugative plasmids). CRISPR clusters contain spacers, sequences complementary to antecedent mobile elements, and target invading nucleic acids. CRISPR clusters are transcribed and processed into CRISPR RNA (crRNA). The type III-A Csm effector complex binds crRNA and acts as a crRNA-guided RNase, DNase and cyclic oligoadenylate synthase; binding of target RNA cognate to the crRNA is required for all activities. This protein is not part of the Csm effector complex. Functionally, a single-strand-specific endoribonuclease (ssRNase) producing free 5'-OH. Activity is approximately 1000-fold stimulated by cyclic oligoadenylate (cOA); only cyclic tetraadenylate (cA4) stimulates the ssRNase activity while linear oligoadenylates do not activate the RNase. Another study showed stimulation by linear tetraadenylate at very high concentrations, but did not examine stimulation by cA4. The polypeptide is CRISPR system endoribonuclease Csm6 (Thermus thermophilus (strain ATCC 27634 / DSM 579 / HB8)).